Here is a 380-residue protein sequence, read N- to C-terminus: Cytochrome b (380 aa).

Transmembrane regions (helical) follow at residues 34–54, 78–99, 114–134, and 179–199; these read FGSL…LLAM, WLIR…YLHI, WNTG…GYVL, and FFAL…IHLT. Heme b contacts are provided by histidine 84 and histidine 98. Heme b contacts are provided by histidine 183 and histidine 197. Histidine 202 is a binding site for a ubiquinone. Helical transmembrane passes span 227–247, 289–309, 321–341, and 348–368; these read LKDI…ALFS, LGGV…PFLH, ISQL…WVGS, and FIII…ILFP.

Belongs to the cytochrome b family. As to quaternary structure, the cytochrome bc1 complex contains 11 subunits: 3 respiratory subunits (MT-CYB, CYC1 and UQCRFS1), 2 core proteins (UQCRC1 and UQCRC2) and 6 low-molecular weight proteins (UQCRH/QCR6, UQCRB/QCR7, UQCRQ/QCR8, UQCR10/QCR9, UQCR11/QCR10 and a cleavage product of UQCRFS1). This cytochrome bc1 complex then forms a dimer. The cofactor is heme b.

The protein resides in the mitochondrion inner membrane. In terms of biological role, component of the ubiquinol-cytochrome c reductase complex (complex III or cytochrome b-c1 complex) that is part of the mitochondrial respiratory chain. The b-c1 complex mediates electron transfer from ubiquinol to cytochrome c. Contributes to the generation of a proton gradient across the mitochondrial membrane that is then used for ATP synthesis. The polypeptide is Cytochrome b (MT-CYB) (Pelecanoides garnotii (Peruvian diving petrel)).